The chain runs to 112 residues: uncharacterized protein (112 aa).

The region spanning 6-60 (LRQLRKAHKLTMEQLAEKIGIAKSSYGGYEAESKKPPLDKLVILARLYDVSVDYI) is the HTH cro/C1-type domain. The H-T-H motif DNA-binding region spans 17–36 (MEQLAEKIGIAKSSYGGYEA).

This is an uncharacterized protein from Bacillus subtilis (strain 168).